A 189-amino-acid chain; its full sequence is Ribulose bisphosphate carboxylase small subunit, chloroplastic (189 aa).

The N-terminal 66 residues, 1 to 66 (MASSIMALSS…KTTSNGSRVR (66 aa)), are a transit peptide targeting the chloroplast.

It belongs to the RuBisCO small chain family. Heterohexadecamer of 8 large and 8 small subunits.

It localises to the plastid. It is found in the chloroplast. Its function is as follows. RuBisCO catalyzes two reactions: the carboxylation of D-ribulose 1,5-bisphosphate, the primary event in carbon dioxide fixation, as well as the oxidative fragmentation of the pentose substrate. Both reactions occur simultaneously and in competition at the same active site. Although the small subunit is not catalytic it is essential for maximal activity. The chain is Ribulose bisphosphate carboxylase small subunit, chloroplastic from Larix laricina (Tamarack).